The chain runs to 139 residues: Transcription antitermination protein NusB (139 aa).

Belongs to the NusB family.

Functionally, involved in transcription antitermination. Required for transcription of ribosomal RNA (rRNA) genes. Binds specifically to the boxA antiterminator sequence of the ribosomal RNA (rrn) operons. The chain is Transcription antitermination protein NusB from Cronobacter sakazakii (strain ATCC BAA-894) (Enterobacter sakazakii).